We begin with the raw amino-acid sequence, 175 residues long: 2-oxo-4-hydroxy-4-carboxy-5-ureidoimidazoline decarboxylase (175 aa).

Catalysis depends on histidine 67, which acts as the Proton donor. Substrate is bound by residues proline 68, serine 84 to glutamine 88, and phenylalanine 119 to alanine 123. The Microbody targeting signal motif lies at threonine 173–leucine 175.

It belongs to the OHCU decarboxylase family.

It is found in the peroxisome. It carries out the reaction 5-hydroxy-2-oxo-4-ureido-2,5-dihydro-1H-imidazole-5-carboxylate + H(+) = (S)-allantoin + CO2. It functions in the pathway purine metabolism; urate degradation; (S)-allantoin from urate: step 3/3. Catalyzes the stereoselective decarboxylation of 2-oxo-4-hydroxy-4-carboxy-5-ureidoimidazoline (OHCU) to (S)-allantoin. In Xenopus laevis (African clawed frog), this protein is 2-oxo-4-hydroxy-4-carboxy-5-ureidoimidazoline decarboxylase (urad).